A 648-amino-acid chain; its full sequence is L-aspartate oxidase 2-b, chloroplastic (648 aa).

FAD is bound by residues 98 to 101 (SGIA), K120, 127 to 134 (STNYAQGG), and D298. Residue R373 is the Proton donor/acceptor of the active site. Residues E458 and 474–475 (SL) contribute to the FAD site.

It belongs to the FAD-dependent oxidoreductase 2 family. NadB subfamily. The cofactor is FAD.

It localises to the plastid. It is found in the chloroplast. It catalyses the reaction L-aspartate + O2 = iminosuccinate + H2O2. It functions in the pathway alkaloid biosynthesis; nicotine biosynthesis. Its pathway is cofactor biosynthesis; NAD(+) biosynthesis; iminoaspartate from L-aspartate (oxidase route): step 1/1. Functionally, involved in the biosynthesis of pyridine alkaloid natural products, leading mainly to the production of anabasine, anatabine, nicotine and nornicotine, effective deterrents against herbivores with antiparasitic and pesticide properties (neurotoxins); nornicotine serves as the precursor in the synthesis of the carcinogen compound N'-nitrosonornicotine (NNN). Catalyzes the oxidation of L-aspartate to iminoaspartate. In Nicotiana tabacum (Common tobacco), this protein is L-aspartate oxidase 2-b, chloroplastic.